We begin with the raw amino-acid sequence, 92 residues long: Defensin (92 aa).

The N-terminal stretch at 1–20 (MKFFVLVAIAFALLACVAQA) is a signal peptide. The propeptide occupies 21 to 52 (QPVSDVDPIPEDHVLVHEDAHQEVLQHSRQKR). 3 disulfide bridges follow: cysteine 55–cysteine 82, cysteine 68–cysteine 88, and cysteine 72–cysteine 90.

The protein belongs to the invertebrate defensin family. Type 1 subfamily. In terms of tissue distribution, hemolymph (at protein level).

Its subcellular location is the secreted. Responsible for the anti Gram-positive activity of immune hemolymph. Expressed in the absence of immune challenge during metamorphosis. This is Defensin (Def) from Drosophila melanogaster (Fruit fly).